Here is a 362-residue protein sequence, read N- to C-terminus: MTDIGAPVTVQVAVDPPYPVVIGTGLLDELEDLLADRHKVAVVHQPGLAETAEEIRKRLAGKGVDAHRIEIPDAEAGKDLPVVGFIWEVLGRIGIGRKDALVSLGGGAATDVAGFAAATWLRGVSIVHLPTTLLGMVDAAVGGKTGINTDAGKNLVGAFHQPLAVLVDLATLQTLPRDEMICGMAEVVKAGFIADPVILDLIEADPQAALDPAGDVLPELIRRAITVKAEVVAADEKESELREILNYGHTLGHAIERRERYRWRHGAAVSVGLVFAAELARLAGRLDDATAQRHRTILSSLGLPVSYDPDALPQLLEIMAGDKKTRAGVLRFVVLDGLAKPGRMVGPDPGLLVTAYAGVCAP.

NAD(+) is bound by residues 73 to 78, 107 to 111, 131 to 132, Lys144, Lys153, and 171 to 174; these read DAEAGK, GAATD, TT, and TLQT. The Zn(2+) site is built by Glu186, His249, and His265.

This sequence belongs to the sugar phosphate cyclases superfamily. Dehydroquinate synthase family. It depends on NAD(+) as a cofactor. The cofactor is Co(2+). Requires Zn(2+) as cofactor.

The protein resides in the cytoplasm. The enzyme catalyses 7-phospho-2-dehydro-3-deoxy-D-arabino-heptonate = 3-dehydroquinate + phosphate. It functions in the pathway metabolic intermediate biosynthesis; chorismate biosynthesis; chorismate from D-erythrose 4-phosphate and phosphoenolpyruvate: step 2/7. Functionally, catalyzes the conversion of 3-deoxy-D-arabino-heptulosonate 7-phosphate (DAHP) to dehydroquinate (DHQ). In Mycobacterium bovis (strain ATCC BAA-935 / AF2122/97), this protein is 3-dehydroquinate synthase.